The sequence spans 373 residues: tRNA-specific 2-thiouridylase MnmA (373 aa).

Residues 12 to 19 (GMSGGVDS) and methionine 38 contribute to the ATP site. The interval 98–100 (NPD) is interaction with target base in tRNA. Cysteine 103 (nucleophile) is an active-site residue. A disulfide bridge connects residues cysteine 103 and cysteine 200. Position 127 (glycine 127) interacts with ATP. The segment at 150-152 (KDQ) is interaction with tRNA. Cysteine 200 functions as the Cysteine persulfide intermediate in the catalytic mechanism. The segment at 312 to 313 (RY) is interaction with tRNA.

The protein belongs to the MnmA/TRMU family.

The protein localises to the cytoplasm. It carries out the reaction S-sulfanyl-L-cysteinyl-[protein] + uridine(34) in tRNA + AH2 + ATP = 2-thiouridine(34) in tRNA + L-cysteinyl-[protein] + A + AMP + diphosphate + H(+). Functionally, catalyzes the 2-thiolation of uridine at the wobble position (U34) of tRNA, leading to the formation of s(2)U34. The polypeptide is tRNA-specific 2-thiouridylase MnmA (Streptococcus pneumoniae (strain JJA)).